Here is a 164-residue protein sequence, read N- to C-terminus: Transcription elongation factor GreA (164 aa).

Positions 15 to 76 form a coiled coil; sequence DRLKNELDQL…LQELLNSAKV (62 aa).

This sequence belongs to the GreA/GreB family.

Necessary for efficient RNA polymerase transcription elongation past template-encoded arresting sites. The arresting sites in DNA have the property of trapping a certain fraction of elongating RNA polymerases that pass through, resulting in locked ternary complexes. Cleavage of the nascent transcript by cleavage factors such as GreA or GreB allows the resumption of elongation from the new 3'terminus. GreA releases sequences of 2 to 3 nucleotides. This is Transcription elongation factor GreA from Rhodococcus erythropolis (strain PR4 / NBRC 100887).